A 490-amino-acid polypeptide reads, in one-letter code: Nuclear transcription factor Y subunit beta (490 aa).

The disordered stretch occupies residues 1-48 (MSGNEDFIYDDNSSSSISNQTDGGGGGGSSNNNSGGNANNNNNEGDRE). Residues 30–43 (SNNNSGGNANNNNN) show a composition bias toward low complexity. The DNA-binding element occupies 53–59 (LPIANII). Residues 80 to 91 (VQDCVSEFISFI) are subunit association domain (SAD). Disordered regions lie at residues 139 to 195 (EKNS…QQQQ) and 221 to 264 (QQQQ…NQQY). Low complexity predominate over residues 181–195 (QQQQQPPQVQQQQQQ). Positions 188–219 (QVQQQQQQQQQQQQQQLQQQQQLQQHQQQQLQ) form a coiled coil. Residues 269 to 307 (QQQQQQQQQQQQQQQQQQQQQQQQQQQQQQQQQQQQQVQ) adopt a coiled-coil conformation. Disordered regions lie at residues 325–370 (NQQA…QHLQ) and 399–490 (QFSN…PSTS). Low complexity predominate over residues 399 to 468 (QFSNNNNNNN…GNSLHNSGNS (70 aa)). The segment covering 478-490 (PYISTNPEYPSTS) has biased composition (polar residues).

This sequence belongs to the NFYB/HAP3 subunit family. Heterotrimeric transcription factor composed of three components, nfyA, nfyB and nfyC. nfyB and nfyC must interact and dimerize for nfyA association and DNA binding.

The protein localises to the nucleus. Its function is as follows. Component of the NF-Y/HAP transcription factor complex. The NF-Y complex stimulates the transcription of various genes by recognizing and binding to a CCAAT motif in promoters. The protein is Nuclear transcription factor Y subunit beta (nfyB) of Dictyostelium discoideum (Social amoeba).